Here is a 366-residue protein sequence, read N- to C-terminus: Anhydro-N-acetylmuramic acid kinase (366 aa).

An ATP-binding site is contributed by 10–17 (GTSMDGID).

It belongs to the anhydro-N-acetylmuramic acid kinase family.

It catalyses the reaction 1,6-anhydro-N-acetyl-beta-muramate + ATP + H2O = N-acetyl-D-muramate 6-phosphate + ADP + H(+). It participates in amino-sugar metabolism; 1,6-anhydro-N-acetylmuramate degradation. Its pathway is cell wall biogenesis; peptidoglycan recycling. Catalyzes the specific phosphorylation of 1,6-anhydro-N-acetylmuramic acid (anhMurNAc) with the simultaneous cleavage of the 1,6-anhydro ring, generating MurNAc-6-P. Is required for the utilization of anhMurNAc either imported from the medium or derived from its own cell wall murein, and thus plays a role in cell wall recycling. The sequence is that of Anhydro-N-acetylmuramic acid kinase from Legionella pneumophila (strain Paris).